We begin with the raw amino-acid sequence, 420 residues long: MQIPGHIDPVTTGTVPLRGGNRIDLVGLSRDAIGGVLVEAGLDAKAAKLRAKQIWHWIYHRGVTDFMGMTDIAKAMRPWLTDRFIIGRPTVREAQVSSDGTRKWLLAAADGQEYEMVFIPDADRGTLCVSSQVGCTLNCRFCHTGTMRLVRNLGAGEIVGQVLLARDALGEWPKGNMAGFGAGSDADPEDDDADDDAVGHYTADGRMLTNIVMMGMGEPLYNFDEVKAALKIVMDGDGLALSKRRITLSTSGVVPMMARAGEEIGVNLAVSLHAVSKEIRDEIVPLNRKYGIEELLQACADYPGANNARRITFEYVMLKDKNDRDEDARELVRLIKQYKLPAKVNLIPFNPWPGAPYECSTPERVRAFSNLIFKAGISAPIRTPRGRDIMAACGQLKSAATRPTRAELDRIAEEKQAALG.

Residue Glu115 is the Proton acceptor of the active site. Positions 121–388 (DADRGTLCVS…APIRTPRGRD (268 aa)) constitute a Radical SAM core domain. An intrachain disulfide couples Cys128 to Cys393. Residues Cys135, Cys139, and Cys142 each contribute to the [4Fe-4S] cluster site. S-adenosyl-L-methionine is bound by residues 217–218 (GE), Ser249, 271–273 (SLH), and Asn350. Residue Cys393 is the S-methylcysteine intermediate of the active site.

The protein belongs to the radical SAM superfamily. RlmN family. [4Fe-4S] cluster serves as cofactor.

The protein localises to the cytoplasm. It carries out the reaction adenosine(2503) in 23S rRNA + 2 reduced [2Fe-2S]-[ferredoxin] + 2 S-adenosyl-L-methionine = 2-methyladenosine(2503) in 23S rRNA + 5'-deoxyadenosine + L-methionine + 2 oxidized [2Fe-2S]-[ferredoxin] + S-adenosyl-L-homocysteine. The catalysed reaction is adenosine(37) in tRNA + 2 reduced [2Fe-2S]-[ferredoxin] + 2 S-adenosyl-L-methionine = 2-methyladenosine(37) in tRNA + 5'-deoxyadenosine + L-methionine + 2 oxidized [2Fe-2S]-[ferredoxin] + S-adenosyl-L-homocysteine. Specifically methylates position 2 of adenine 2503 in 23S rRNA and position 2 of adenine 37 in tRNAs. m2A2503 modification seems to play a crucial role in the proofreading step occurring at the peptidyl transferase center and thus would serve to optimize ribosomal fidelity. The chain is Dual-specificity RNA methyltransferase RlmN from Sphingopyxis alaskensis (strain DSM 13593 / LMG 18877 / RB2256) (Sphingomonas alaskensis).